A 75-amino-acid chain; its full sequence is Endogenous retrovirus group K member 24 Np9 protein (75 aa).

Positions 22-43 are disordered; that stretch reads TAPKRQRPSRTGHDDDGGFVEK. Residues 32–43 show a composition bias toward basic and acidic residues; the sequence is TGHDDDGGFVEK.

As to expression, transcript detectable in many tumor cell lines and tumor tissues.

The protein resides in the nucleus. Functionally, may possess a function in tumorigenesis. This is Endogenous retrovirus group K member 24 Np9 protein (ERVK-24) from Homo sapiens (Human).